Reading from the N-terminus, the 1574-residue chain is Synaptojanin-1 (1574 aa).

An SAC domain is found at Val-119–Gly-442. Residues Gly-500–Ser-899 form a catalytic region. A phosphoserine mark is found at Ser-820 and Ser-830. An RRM domain is found at Gly-894 to Pro-971. A compositionally biased stretch (low complexity) spans His-1029–Pro-1054. Residues His-1029–Ser-1327 form a disordered region. At Ser-1053 the chain carries Phosphoserine. A compositionally biased stretch (polar residues) spans Pro-1090–Ile-1100. The span at Pro-1105–Ser-1127 shows a compositional bias: pro residues. A phosphoserine mark is found at Ser-1147 and Ser-1175. Residue Arg-1198 is modified to Omega-N-methylarginine. Thr-1217 is subject to Phosphothreonine. The segment covering Ser-1287–Gln-1310 has biased composition (low complexity). Phosphoserine is present on residues Ser-1289 and Ser-1350. Residue Thr-1354 is modified to Phosphothreonine. Disordered stretches follow at residues Thr-1382–Asp-1519 and Leu-1532–Arg-1574. Residues Gln-1389–Thr-1413 show a composition bias toward polar residues. 3 repeat units span residues Asn-1401–Phe-1403, Asn-1410–Phe-1412, and Asn-1421–Phe-1423. Residues Asn-1401–Phe-1423 are 3 X 3 AA repeats of N-P-F. 2 stretches are compositionally biased toward polar residues: residues Arg-1424–Leu-1436 and Asp-1472–Pro-1484. Pro residues predominate over residues Arg-1535–Pro-1548. The span at Pro-1549–Ser-1563 shows a compositional bias: low complexity. At Ser-1566 the chain carries Phosphoserine.

This sequence belongs to the synaptojanin family. The protein in the central section; belongs to the inositol 1,4,5-trisphosphate 5-phosphatase family. In terms of assembly, interacts with ASH/GRB2. Interacts with PACSIN1, PACSIN2 and PACSIN3. Interacts with AMPH, SH3GL1, SH3GL2 and SH3GL3. Interacts with MYO1E (via SH3 domain). Interacts with BIN1 and DNM1. Interacts with EPS15. Found in neonatal brain, and in a wide variety of adult non-neuronal tissues. Concentrated at clathrin-coated endocytic intermediates in nerve terminals. Also detected in the lung and heart. Expressed at higher levels than isoform 2 in the testis and liver and is not detected in the skeletal muscle. As to expression, expressed predominantly in the neurons, but is also found in all other tissues at much lower levels. Also detected in the lung and heart. Epressed at lower levels than isoform 1 in the testis and liver and is not detected in the skeletal muscle. In terms of tissue distribution, expressed in the brain.

It is found in the membrane. The protein localises to the cytoplasm. It localises to the perinuclear region. The catalysed reaction is a 1,2-diacyl-sn-glycero-3-phospho-(1D-myo-inositol-4,5-bisphosphate) + H2O = a 1,2-diacyl-sn-glycero-3-phospho-(1D-myo-inositol 4-phosphate) + phosphate. In terms of biological role, phosphatase that acts on various phosphoinositides, including phosphatidylinositol 4-phosphate, phosphatidylinositol (4,5)-bisphosphate and phosphatidylinositol (3,4,5)-trisphosphate. Has a role in clathrin-mediated endocytosis. Hydrolyzes PIP2 bound to actin regulatory proteins resulting in the rearrangement of actin filaments downstream of tyrosine kinase and ASH/GRB2. This Rattus norvegicus (Rat) protein is Synaptojanin-1 (Synj1).